A 156-amino-acid chain; its full sequence is ATP synthase subunit b (156 aa).

A helical membrane pass occupies residues 7-27; it reads LIGQTVAFIIFVWFCMKFVWP.

The protein belongs to the ATPase B chain family. F-type ATPases have 2 components, F(1) - the catalytic core - and F(0) - the membrane proton channel. F(1) has five subunits: alpha(3), beta(3), gamma(1), delta(1), epsilon(1). F(0) has three main subunits: a(1), b(2) and c(10-14). The alpha and beta chains form an alternating ring which encloses part of the gamma chain. F(1) is attached to F(0) by a central stalk formed by the gamma and epsilon chains, while a peripheral stalk is formed by the delta and b chains.

The protein resides in the cell inner membrane. In terms of biological role, f(1)F(0) ATP synthase produces ATP from ADP in the presence of a proton or sodium gradient. F-type ATPases consist of two structural domains, F(1) containing the extramembraneous catalytic core and F(0) containing the membrane proton channel, linked together by a central stalk and a peripheral stalk. During catalysis, ATP synthesis in the catalytic domain of F(1) is coupled via a rotary mechanism of the central stalk subunits to proton translocation. Component of the F(0) channel, it forms part of the peripheral stalk, linking F(1) to F(0). The sequence is that of ATP synthase subunit b from Shewanella sp. (strain MR-4).